The following is a 144-amino-acid chain: Deoxyuridine 5'-triphosphate nucleotidohydrolase (144 aa).

Residues 63 to 65, Asn-76, and 80 to 82 contribute to the substrate site; these read RSG and TID.

The protein belongs to the dUTPase family. Mg(2+) is required as a cofactor.

It carries out the reaction dUTP + H2O = dUMP + diphosphate + H(+). It participates in pyrimidine metabolism; dUMP biosynthesis; dUMP from dCTP (dUTP route): step 2/2. Functionally, this enzyme is involved in nucleotide metabolism: it produces dUMP, the immediate precursor of thymidine nucleotides and it decreases the intracellular concentration of dUTP so that uracil cannot be incorporated into DNA. This Porphyromonas gingivalis (strain ATCC 33277 / DSM 20709 / CIP 103683 / JCM 12257 / NCTC 11834 / 2561) protein is Deoxyuridine 5'-triphosphate nucleotidohydrolase.